A 1071-amino-acid polypeptide reads, in one-letter code: ATP-dependent helicase/deoxyribonuclease subunit B (1071 aa).

It belongs to the helicase family. AddB/RexB type 2 subfamily. As to quaternary structure, heterodimer of AddA and RexB. Mg(2+) is required as a cofactor.

The heterodimer acts as both an ATP-dependent DNA helicase and an ATP-dependent, dual-direction single-stranded exonuclease. Recognizes the chi site generating a DNA molecule suitable for the initiation of homologous recombination. This subunit has 5' -&gt; 3' nuclease activity but not helicase activity. This chain is ATP-dependent helicase/deoxyribonuclease subunit B, found in Streptococcus pyogenes serotype M6 (strain ATCC BAA-946 / MGAS10394).